The chain runs to 122 residues: Large ribosomal subunit protein uL14 (122 aa).

Belongs to the universal ribosomal protein uL14 family. Part of the 50S ribosomal subunit. Forms a cluster with proteins L3 and L19. In the 70S ribosome, L14 and L19 interact and together make contacts with the 16S rRNA in bridges B5 and B8.

Functionally, binds to 23S rRNA. Forms part of two intersubunit bridges in the 70S ribosome. This is Large ribosomal subunit protein uL14 from Teredinibacter turnerae (strain ATCC 39867 / T7901).